Consider the following 725-residue polypeptide: G-quartet DNA-binding protein TGP1 (725 aa).

The Nuclear localization signal signature appears at 241–258 (KKALTDVLQIHEKKERVH). Disordered regions lie at residues 252-284 (EKKERVHKQQNKNKNPRNAHKNHNRQRPNLQET) and 468-614 (EIHK…GKRG). The segment covering 256 to 277 (RVHKQQNKNKNPRNAHKNHNRQ) has biased composition (basic residues). The span at 468 to 478 (EIHKIDRERKR) shows a compositional bias: basic and acidic residues. The span at 517 to 544 (NKYKNTSVQNNNNNKNQQRSQSQNQRPP) shows a compositional bias: low complexity. Positions 545 to 564 (RNYDNRQGGENRNNRQRNEN) are enriched in basic and acidic residues. Over residues 565–593 (NRNNFNGNGHRVNNQNNQRNRNSSYPRNN) the composition is skewed to low complexity.

Post-translationally, the N-terminus is blocked.

The protein resides in the nucleus. Binds specifically to parallel G4-DNA, a four-stranded structure stabilized by tetrads of hydrogen-bonded guanines. The polypeptide is G-quartet DNA-binding protein TGP1 (TGP1) (Tetrahymena thermophila).